A 374-amino-acid polypeptide reads, in one-letter code: Queuine tRNA-ribosyltransferase (374 aa).

D89 serves as the catalytic Proton acceptor. Substrate-binding positions include 89–93, D143, Q187, and G214; that span reads DSGGF. Residues 245–251 are RNA binding; sequence GVGKPED. D264 (nucleophile) is an active-site residue. Residues 269-273 form an RNA binding; important for wobble base 34 recognition region; the sequence is TRNAR. C302, C304, C307, and H333 together coordinate Zn(2+).

The protein belongs to the queuine tRNA-ribosyltransferase family. In terms of assembly, homodimer. Within each dimer, one monomer is responsible for RNA recognition and catalysis, while the other monomer binds to the replacement base PreQ1. Zn(2+) is required as a cofactor.

The catalysed reaction is 7-aminomethyl-7-carbaguanine + guanosine(34) in tRNA = 7-aminomethyl-7-carbaguanosine(34) in tRNA + guanine. It functions in the pathway tRNA modification; tRNA-queuosine biosynthesis. Its function is as follows. Catalyzes the base-exchange of a guanine (G) residue with the queuine precursor 7-aminomethyl-7-deazaguanine (PreQ1) at position 34 (anticodon wobble position) in tRNAs with GU(N) anticodons (tRNA-Asp, -Asn, -His and -Tyr). Catalysis occurs through a double-displacement mechanism. The nucleophile active site attacks the C1' of nucleotide 34 to detach the guanine base from the RNA, forming a covalent enzyme-RNA intermediate. The proton acceptor active site deprotonates the incoming PreQ1, allowing a nucleophilic attack on the C1' of the ribose to form the product. After dissociation, two additional enzymatic reactions on the tRNA convert PreQ1 to queuine (Q), resulting in the hypermodified nucleoside queuosine (7-(((4,5-cis-dihydroxy-2-cyclopenten-1-yl)amino)methyl)-7-deazaguanosine). This Serratia proteamaculans (strain 568) protein is Queuine tRNA-ribosyltransferase.